The primary structure comprises 103 residues: Cell division protein FtsB (103 aa).

Over 1-3 the chain is Cytoplasmic; the sequence is MGK. The chain crosses the membrane as a helical span at residues 4 to 21; that stretch reads LTLLLLAILVWLQYSLWF. The Periplasmic segment spans residues 22–103; sequence GKNGIHDYSR…RAQTAGQNNR (82 aa). Residues 31–71 are a coiled coil; it reads RVNDDVAAQQATNAKLKARNDQLFAEIDDLNGGQEALEERA.

It belongs to the FtsB family. In terms of assembly, part of a complex composed of FtsB, FtsL and FtsQ.

It is found in the cell inner membrane. In terms of biological role, essential cell division protein. May link together the upstream cell division proteins, which are predominantly cytoplasmic, with the downstream cell division proteins, which are predominantly periplasmic. The sequence is that of Cell division protein FtsB from Escherichia fergusonii (strain ATCC 35469 / DSM 13698 / CCUG 18766 / IAM 14443 / JCM 21226 / LMG 7866 / NBRC 102419 / NCTC 12128 / CDC 0568-73).